The sequence spans 92 residues: Putative regulatory protein CKL_1364 (92 aa).

It belongs to the RemA family.

In Clostridium kluyveri (strain ATCC 8527 / DSM 555 / NBRC 12016 / NCIMB 10680 / K1), this protein is Putative regulatory protein CKL_1364.